A 422-amino-acid polypeptide reads, in one-letter code: Serine hydroxymethyltransferase (422 aa).

Residues L118 and 122–124 (GHL) contribute to the (6S)-5,6,7,8-tetrahydrofolate site. K227 bears the N6-(pyridoxal phosphate)lysine mark. Residues E243 and 351–353 (SPF) contribute to the (6S)-5,6,7,8-tetrahydrofolate site.

Belongs to the SHMT family. In terms of assembly, homodimer. Pyridoxal 5'-phosphate is required as a cofactor.

The protein localises to the cytoplasm. The enzyme catalyses (6R)-5,10-methylene-5,6,7,8-tetrahydrofolate + glycine + H2O = (6S)-5,6,7,8-tetrahydrofolate + L-serine. It participates in one-carbon metabolism; tetrahydrofolate interconversion. Its pathway is amino-acid biosynthesis; glycine biosynthesis; glycine from L-serine: step 1/1. Catalyzes the reversible interconversion of serine and glycine with tetrahydrofolate (THF) serving as the one-carbon carrier. This reaction serves as the major source of one-carbon groups required for the biosynthesis of purines, thymidylate, methionine, and other important biomolecules. Also exhibits THF-independent aldolase activity toward beta-hydroxyamino acids, producing glycine and aldehydes, via a retro-aldol mechanism. This is Serine hydroxymethyltransferase from Fervidobacterium nodosum (strain ATCC 35602 / DSM 5306 / Rt17-B1).